Reading from the N-terminus, the 124-residue chain is Small ribosomal subunit protein bS6 (124 aa).

The segment at 99–124 is disordered; the sequence is PLPAPRIVPGSEPEPVQQQEAAAVEA. The segment covering 111–124 has biased composition (low complexity); that stretch reads PEPVQQQEAAAVEA.

Belongs to the bacterial ribosomal protein bS6 family.

Functionally, binds together with bS18 to 16S ribosomal RNA. In Prochlorococcus marinus (strain MIT 9313), this protein is Small ribosomal subunit protein bS6.